The primary structure comprises 395 residues: MSNESGRFLFTSESVSMGHPDKLADRISDSILDALLAQDPHSRVACETLVTTGLAVIAGEISSKADVDYEKIVRDTIVAVGYDDPDIGIDGKTCEVQIRLDAQSPDIAQGVNSDEASGKDIGAGDQGLMFGYACKDTPELMPLPIALSHRIINRITEARFNKEVDWLRPDNKSQVTVEYDGNRPVRIEAVVVSAQHGPDVSHDEIEKFVIENVVKPSIPAELDKGDIKYHINPTGKFIIGGPHGDCGLTGRKIIVDTYGGWGRHGGGAFSGKDSTKVDRSAAYMARYVAKNIVAAGLAERCEVQLAYAIGVTEPVSVHVDTEGTGKIEDAKLCELIREHFPLTPGGIIDHLQLRRPVFVETTAGGHFGRDGEGFTWEKTDKADALAEAAGATATA.

Position 19 (His19) interacts with ATP. Asp21 is a binding site for Mg(2+). Position 47 (Glu47) interacts with K(+). L-methionine contacts are provided by Glu60 and Gln103. Positions 103 to 113 (QSPDIAQGVNS) are flexible loop. ATP-binding positions include 170–172 (DNK), 236–237 (KF), Asp245, 251–252 (RK), Ala268, and Lys272. Asp245 is a binding site for L-methionine. Residue Lys276 participates in L-methionine binding.

It belongs to the AdoMet synthase family. Homotetramer; dimer of dimers. Requires Mg(2+) as cofactor. K(+) serves as cofactor.

The protein resides in the cytoplasm. It catalyses the reaction L-methionine + ATP + H2O = S-adenosyl-L-methionine + phosphate + diphosphate. The protein operates within amino-acid biosynthesis; S-adenosyl-L-methionine biosynthesis; S-adenosyl-L-methionine from L-methionine: step 1/1. In terms of biological role, catalyzes the formation of S-adenosylmethionine (AdoMet) from methionine and ATP. The overall synthetic reaction is composed of two sequential steps, AdoMet formation and the subsequent tripolyphosphate hydrolysis which occurs prior to release of AdoMet from the enzyme. The chain is S-adenosylmethionine synthase from Rhodopirellula baltica (strain DSM 10527 / NCIMB 13988 / SH1).